We begin with the raw amino-acid sequence, 417 residues long: L-rhamnose isomerase (417 aa).

3 residues coordinate Mn(2+): His-261, Asp-293, and Asp-295.

Belongs to the rhamnose isomerase family. It depends on Mn(2+) as a cofactor.

It localises to the cytoplasm. The catalysed reaction is L-rhamnopyranose = L-rhamnulose. The protein operates within carbohydrate degradation; L-rhamnose degradation; glycerone phosphate from L-rhamnose: step 1/3. In terms of biological role, catalyzes the interconversion of L-rhamnose and L-rhamnulose. In Oceanobacillus iheyensis (strain DSM 14371 / CIP 107618 / JCM 11309 / KCTC 3954 / HTE831), this protein is L-rhamnose isomerase.